A 589-amino-acid polypeptide reads, in one-letter code: Aspartate--tRNA ligase (589 aa).

Glutamate 174 contributes to the L-aspartate binding site. Residues 198–201 form an aspartate region; it reads QLFK. Residue arginine 220 coordinates L-aspartate. ATP is bound by residues 220–222 and glutamine 229; that span reads RDE. Histidine 448 contributes to the L-aspartate binding site. Glutamate 483 serves as a coordination point for ATP. Arginine 490 contacts L-aspartate. Position 535 to 538 (535 to 538) interacts with ATP; it reads GIDR.

This sequence belongs to the class-II aminoacyl-tRNA synthetase family. Type 1 subfamily. As to quaternary structure, homodimer.

It is found in the cytoplasm. It catalyses the reaction tRNA(Asp) + L-aspartate + ATP = L-aspartyl-tRNA(Asp) + AMP + diphosphate. Catalyzes the attachment of L-aspartate to tRNA(Asp) in a two-step reaction: L-aspartate is first activated by ATP to form Asp-AMP and then transferred to the acceptor end of tRNA(Asp). This chain is Aspartate--tRNA ligase, found in Xylella fastidiosa (strain 9a5c).